A 126-amino-acid polypeptide reads, in one-letter code: MSVMDLANTCSSFQSDLDFCSDCGSVLPLPGAQDTVTCIRCGFNINVRDFEGKVVKTSVVFHQLGTAMPMSVEEGPECQGPVVDRRCPRCGHEGMAYHTRQMRSADEGQTVFYTCTNCKFQEKEDS.

Residues cysteine 20, cysteine 23, cysteine 38, cysteine 41, cysteine 87, and cysteine 90 each coordinate Zn(2+). The segment at 20 to 41 adopts a C4-type zinc-finger fold; the sequence is CSDCGSVLPLPGAQDTVTCIRC. The segment at 83–123 adopts a TFIIS-type zinc-finger fold; the sequence is VDRRCPRCGHEGMAYHTRQMRSADEGQTVFYTCTNCKFQEK. The Hairpin motif lies at 106–107; it reads DE. Residues cysteine 115 and cysteine 118 each contribute to the Zn(2+) site.

Belongs to the archaeal RpoM/eukaryotic RPA12/RPB9/RPC11 RNA polymerase family. Component of the RNA polymerase I (Pol I) complex consisting of 13 subunits: a ten-subunit catalytic core composed of POLR1A/RPA1, POLR1B/RPA2, POLR1C/RPAC1, POLR1D/RPAC2, POLR1H/RPA12, POLR2E/RPABC1, POLR2F/RPABC2, POLR2H/RPABC3, POLR2K/RPABC4 and POLR2L/RPABC5; a mobile stalk subunit POLR1F/RPA43 protruding from the core and additional subunits homologous to general transcription factors POLR1E/RPA49 and POLR1G/RPA34. Part of Pol I pre-initiation complex (PIC), in which Pol I core assembles with RRN3 and promoter-bound UTBF and SL1/TIF-IB complex.

The protein resides in the nucleus. It is found in the nucleolus. Functionally, core component of RNA polymerase I (Pol I), a DNA-dependent RNA polymerase which synthesizes ribosomal RNA precursors using the four ribonucleoside triphosphates as substrates. Can mediate Pol I proofreading of the nascent RNA transcript. Anchors into the Pol I active site to monitor transcription fidelity and cleave mis-incorporated 5'-ribonucleotides. The chain is DNA-directed RNA polymerase I subunit RPA12 from Homo sapiens (Human).